The chain runs to 306 residues: Glycine--tRNA ligase alpha subunit (306 aa).

Belongs to the class-II aminoacyl-tRNA synthetase family. As to quaternary structure, tetramer of two alpha and two beta subunits.

The protein resides in the cytoplasm. The enzyme catalyses tRNA(Gly) + glycine + ATP = glycyl-tRNA(Gly) + AMP + diphosphate. This chain is Glycine--tRNA ligase alpha subunit, found in Aliivibrio fischeri (strain ATCC 700601 / ES114) (Vibrio fischeri).